Here is a 282-residue protein sequence, read N- to C-terminus: Halorhodopsin (282 aa).

Over 1-29 (MMETAADALASGTVPLEMTQTQIFEAIQG) the chain is Extracellular. A helical membrane pass occupies residues 30–55 (DTLLASSLWINIALAGLSILLFVYMG). Residues 56 to 61 (RNLEDP) are Cytoplasmic-facing. A helical transmembrane segment spans residues 62 to 85 (RAQLIFVATLMVPLVSISSYTGLV). The Extracellular portion of the chain corresponds to 86 to 109 (SGLTVSFLEMPAGHALAGQEVLTP). A helical membrane pass occupies residues 110–131 (WGRYLTWALSTPMILVALGLLA). Residues 132-134 (GSN) lie on the Cytoplasmic side of the membrane. The chain crosses the membrane as a helical span at residues 135 to 158 (ATKLFTAVTADIGMCVTGLAAALT). Over 159–161 (TSS) the chain is Extracellular. Residues 162–184 (YLLRWVWYVISCAFFVVVLYVLL) form a helical membrane-spanning segment. The Cytoplasmic portion of the chain corresponds to 185 to 196 (AEWAEDAEVAGT). A helical membrane pass occupies residues 197–220 (AEIFNTLKLLTVVLWLGYPIFWAL). At 221 to 229 (GAEGLAVLD) the chain is on the extracellular side. A helical membrane pass occupies residues 230-258 (VAVTSWAYSGMDIVAKYLFAFLLLRWVVD). Lysine 245 carries the N6-(retinylidene)lysine modification. Residues 259–282 (NERTVAGMAAGLGAPLARCAPADD) lie on the Cytoplasmic side of the membrane.

Belongs to the archaeal/bacterial/fungal opsin family.

It localises to the cell membrane. Functionally, light-driven chloride pump. This Halorubrum sodomense protein is Halorhodopsin (hop).